The chain runs to 219 residues: N-(5'-phosphoribosyl)anthranilate isomerase (219 aa).

This sequence belongs to the TrpF family.

It carries out the reaction N-(5-phospho-beta-D-ribosyl)anthranilate = 1-(2-carboxyphenylamino)-1-deoxy-D-ribulose 5-phosphate. It functions in the pathway amino-acid biosynthesis; L-tryptophan biosynthesis; L-tryptophan from chorismate: step 3/5. The protein is N-(5'-phosphoribosyl)anthranilate isomerase of Chloroherpeton thalassium (strain ATCC 35110 / GB-78).